A 176-amino-acid chain; its full sequence is ATP synthase subunit b (176 aa).

A helical membrane pass occupies residues 7-27 (IQIPDGSAIFVLLTFILLMFI). Residues 75 to 94 (SQSQATALMENARKSSEEQS) form a disordered region. The span at 85 to 94 (NARKSSEEQS) shows a compositional bias: basic and acidic residues.

This sequence belongs to the ATPase B chain family. In terms of assembly, F-type ATPases have 2 components, F(1) - the catalytic core - and F(0) - the membrane proton channel. F(1) has five subunits: alpha(3), beta(3), gamma(1), delta(1), epsilon(1). F(0) has three main subunits: a(1), b(2) and c(10-14). The alpha and beta chains form an alternating ring which encloses part of the gamma chain. F(1) is attached to F(0) by a central stalk formed by the gamma and epsilon chains, while a peripheral stalk is formed by the delta and b chains.

The protein localises to the cell membrane. F(1)F(0) ATP synthase produces ATP from ADP in the presence of a proton or sodium gradient. F-type ATPases consist of two structural domains, F(1) containing the extramembraneous catalytic core and F(0) containing the membrane proton channel, linked together by a central stalk and a peripheral stalk. During catalysis, ATP synthesis in the catalytic domain of F(1) is coupled via a rotary mechanism of the central stalk subunits to proton translocation. Functionally, component of the F(0) channel, it forms part of the peripheral stalk, linking F(1) to F(0). This Oenococcus oeni (strain ATCC BAA-331 / PSU-1) protein is ATP synthase subunit b.